The sequence spans 214 residues: Glutathione S-transferase F11 (214 aa).

Residues 2–82 (VVKVYGQIKA…YYATKYADQG (81 aa)) form the GST N-terminal domain. Glutathione-binding positions include 11-12 (AA), 40-41 (QK), 53-54 (QV), and 66-67 (ES). Positions 89–214 (TLEGRAIVDQ…WKKLMELAAY (126 aa)) constitute a GST C-terminal domain.

Belongs to the GST superfamily. Phi family.

Its subcellular location is the cytoplasm. It localises to the cytosol. The catalysed reaction is RX + glutathione = an S-substituted glutathione + a halide anion + H(+). Functionally, may be involved in the conjugation of reduced glutathione to a wide number of exogenous and endogenous hydrophobic electrophiles and have a detoxification role against certain herbicides. The protein is Glutathione S-transferase F11 of Arabidopsis thaliana (Mouse-ear cress).